The primary structure comprises 200 residues: Shikimate kinase (200 aa).

Position 41-46 (41-46) interacts with ATP; the sequence is GVGKSS. Position 45 (Ser45) interacts with Mg(2+). 3 residues coordinate substrate: Asp63, Arg87, and Gly109. Arg147 is a binding site for ATP. Position 166 (Arg166) interacts with substrate.

The protein belongs to the shikimate kinase family. In terms of assembly, monomer. The cofactor is Mg(2+).

The protein resides in the cytoplasm. The catalysed reaction is shikimate + ATP = 3-phosphoshikimate + ADP + H(+). It functions in the pathway metabolic intermediate biosynthesis; chorismate biosynthesis; chorismate from D-erythrose 4-phosphate and phosphoenolpyruvate: step 5/7. In terms of biological role, catalyzes the specific phosphorylation of the 3-hydroxyl group of shikimic acid using ATP as a cosubstrate. This chain is Shikimate kinase, found in Caulobacter vibrioides (strain NA1000 / CB15N) (Caulobacter crescentus).